The primary structure comprises 826 residues: MSASRFMLRPLTRALLMHGATRTRLAGTGLGLALTLTAAPYVQAQEWTLNIPSQPLAQALQTLGQQTSLQIIYSPESLQGLRSTALNGRYQDDESLKAMLNGTGIRYQRDGNTVTVLGPATGSAMELAPTNVNASRLGATTEGSNSYTTGGVTIGKGVHSLKETPQSVTVMTRKMLDDQNLNTIEQVMEKTPGITVYDSPMGGKYFYSRGFRMSGQYQYDGVPLDIGSSYVQADSFNSDMAIYDRVEVLRGAAGMMKGAGGTAGGVNFVRKRGQDTAHTQLSLSAGTWDNYRGQVDTGGPLNDSGTIRGRAVVTEQTRQYFYDVGSRKDQIYYGALDFDLSPDTTLGLGFAWEDVDATPCWGGLPRYADGSDLHLKRSTCLNTAWNNQRSKRATYFADLKHQFNDDWSLKVAGVYSRNTQDMEYAFPSGAVPVGATATNTLMLGSIYDYDQRDYGFDAYVDGKFDAFGQQHELTIGANASRSHKDDFYAVAALPQRQNVLDPNHHIPQPDESYYLANASRGGPVDMHIKQYGAYSIARLKLADPLTLVLGSRVSWYKSDTDSVQYFRGEGTQVDTKSTETGQVTPFAGVLFDLNDNLTAYASYTDIFTPQGAYKTIDGSTLKPLVGQSYELGIKGEWFDGRLNSTFNLFRTLQKDAAQDDPRCEDSSCSINSGKVRAQGFEAEVSGEVIDRLQLLAGYTYTQTKVLEDADATQDGVVYNSYVPRHLLRVWGDYSLSGPLDRVTIGAGVNAQTGNYRTSPIGGDNIDGAGYAVWNGRIGYRIDDTWSVALNGNNLFDKRYYSTIGTEGFGNFYGDPRNFVMSVKADF.

The first 44 residues, 1-44 (MSASRFMLRPLTRALLMHGATRTRLAGTGLGLALTLTAAPYVQA), serve as a signal peptide directing secretion. The TonB box signature appears at 110 to 119 (DGNTVTVLGP). In terms of domain architecture, TBDR plug spans 160–271 (SLKETPQSVT…TAGGVNFVRK (112 aa)). One can recognise a TBDR beta-barrel domain in the interval 276 to 826 (TAHTQLSLSA…NFVMSVKADF (551 aa)). The short motif at 809–826 (GNFYGDPRNFVMSVKADF) is the TonB C-terminal box element.

The protein belongs to the TonB-dependent receptor family.

The protein localises to the cell outer membrane. Its function is as follows. Specific receptor for the siderophore ferric pyoverdine (pseudobactin) M114. The polypeptide is Ferric-pyoverdine M114 receptor PbuA (pbuA) (Pseudomonas sp. (strain M114)).